The chain runs to 757 residues: Catalase-peroxidase (757 aa).

The tryptophyl-tyrosyl-methioninium (Trp-Tyr) (with M-274) cross-link spans 101–248 (WHSAGTYRIG…LAAVQMGLIY (148 aa)). The active-site Proton acceptor is H102. The segment at 213–232 (VHHPDEHRGAKEKASKNSDS) is disordered. A cross-link (tryptophyl-tyrosyl-methioninium (Tyr-Met) (with W-101)) is located at residues 248-274 (YVNPEGPDGCPDPLASARDIRETFARM). Residue H289 participates in heme b binding.

Belongs to the peroxidase family. Peroxidase/catalase subfamily. As to quaternary structure, homodimer or homotetramer. Heme b is required as a cofactor. Formation of the three residue Trp-Tyr-Met cross-link is important for the catalase, but not the peroxidase activity of the enzyme.

The enzyme catalyses H2O2 + AH2 = A + 2 H2O. It carries out the reaction 2 H2O2 = O2 + 2 H2O. Its function is as follows. Bifunctional enzyme with both catalase and broad-spectrum peroxidase activity. The chain is Catalase-peroxidase from Xylella fastidiosa (strain M23).